A 306-amino-acid polypeptide reads, in one-letter code: Non-homologous end joining protein Ku 2 (306 aa).

The Ku domain occupies 21–206; the sequence is ISFGLVNIGV…EVSKQEIDMA (186 aa). The interval 233 to 306 is disordered; that stretch reads LIDAKTKGTK…GSRDKTRKRA (74 aa). A compositionally biased stretch (basic residues) spans 274–290; that stretch reads RTSRRKTTASASRRRSS. Residues 291–300 are compositionally biased toward basic and acidic residues; it reads SNREKTGSRD.

This sequence belongs to the prokaryotic Ku family. Homodimer. Interacts with LigD.

With LigD forms a non-homologous end joining (NHEJ) DNA repair enzyme, which repairs dsDNA breaks with reduced fidelity. Binds linear dsDNA with 5'- and 3'- overhangs but not closed circular dsDNA nor ssDNA. Recruits and stimulates the ligase activity of LigD. In Saccharopolyspora erythraea (strain ATCC 11635 / DSM 40517 / JCM 4748 / NBRC 13426 / NCIMB 8594 / NRRL 2338), this protein is Non-homologous end joining protein Ku 2.